A 541-amino-acid polypeptide reads, in one-letter code: Formimidoyltransferase-cyclodeaminase (541 aa).

Residues 1-181 (MSQLVECVPN…GATVTGARKF (181 aa)) form a formiminotransferase N-subdomain region. His-82 serves as the catalytic For formimidoyltransferase activity. Folate is bound at residue 163–172 (GPSSFVPSWG). The segment at 182 to 326 (LIAFNINLLS…PKERIIEYLV (145 aa)) is formiminotransferase C-subdomain. The segment at 327 to 334 (PDSGPEQS) is linker. The interval 335 to 541 (LLDASLRAFV…VLGSLEARKE (207 aa)) is cyclodeaminase/cyclohydrolase. Catalysis depends on Asp-412, which acts as the For cyclodeaminase activity. Ser-520 is subject to Phosphoserine.

The protein in the C-terminal section; belongs to the cyclodeaminase/cyclohydrolase family. It in the N-terminal section; belongs to the formiminotransferase family. As to quaternary structure, homooctamer, including four polyglutamate binding sites. The subunits are arranged as a tetramer of dimers, and form a planar ring-shaped structure. As to expression, specifically expressed in liver (at protein level).

The protein resides in the cytoplasm. Its subcellular location is the cytosol. It is found in the golgi apparatus. It localises to the cytoskeleton. The protein localises to the microtubule organizing center. The protein resides in the centrosome. Its subcellular location is the centriole. It catalyses the reaction 5-formimidoyltetrahydrofolate + L-glutamate = N-formimidoyl-L-glutamate + (6S)-5,6,7,8-tetrahydrofolate. The enzyme catalyses 5-formimidoyltetrahydrofolate + 2 H(+) = (6R)-5,10-methenyltetrahydrofolate + NH4(+). It functions in the pathway amino-acid degradation; L-histidine degradation into L-glutamate; L-glutamate from N-formimidoyl-L-glutamate (transferase route): step 1/1. Folate-dependent enzyme, that displays both transferase and deaminase activity. Serves to channel one-carbon units from formiminoglutamate to the folate pool. Its function is as follows. Binds and promotes bundling of vimentin filaments originating from the Golgi. In Rattus norvegicus (Rat), this protein is Formimidoyltransferase-cyclodeaminase (Ftcd).